The following is a 255-amino-acid chain: Uracil-DNA glycosylase (255 aa).

Asp-93 (proton acceptor) is an active-site residue.

Belongs to the uracil-DNA glycosylase (UDG) superfamily. UNG family.

The protein resides in the host nucleus. It catalyses the reaction Hydrolyzes single-stranded DNA or mismatched double-stranded DNA and polynucleotides, releasing free uracil.. Functionally, excises uracil residues from the DNA which can arise as a result of misincorporation of dUMP residues by DNA polymerase or deamination of cytosines. Therefore may reduce deleterious uracil incorporation into the viral genome, particularly in terminally differentiated cells which lack DNA repair enzymes. This is Uracil-DNA glycosylase (U81) from Human herpesvirus 6A (strain Uganda-1102) (HHV-6 variant A).